Reading from the N-terminus, the 1187-residue chain is DNA-directed RNA polymerase subunit beta (1187 aa).

It belongs to the RNA polymerase beta chain family. In terms of assembly, the RNAP catalytic core consists of 2 alpha, 1 beta, 1 beta' and 1 omega subunit. When a sigma factor is associated with the core the holoenzyme is formed, which can initiate transcription.

It carries out the reaction RNA(n) + a ribonucleoside 5'-triphosphate = RNA(n+1) + diphosphate. DNA-dependent RNA polymerase catalyzes the transcription of DNA into RNA using the four ribonucleoside triphosphates as substrates. This Petrotoga mobilis (strain DSM 10674 / SJ95) protein is DNA-directed RNA polymerase subunit beta.